A 287-amino-acid chain; its full sequence is 2-dehydro-3-deoxyphosphooctonate aldolase (287 aa).

Belongs to the KdsA family.

The protein resides in the cytoplasm. It carries out the reaction D-arabinose 5-phosphate + phosphoenolpyruvate + H2O = 3-deoxy-alpha-D-manno-2-octulosonate-8-phosphate + phosphate. It functions in the pathway carbohydrate biosynthesis; 3-deoxy-D-manno-octulosonate biosynthesis; 3-deoxy-D-manno-octulosonate from D-ribulose 5-phosphate: step 2/3. Its pathway is bacterial outer membrane biogenesis; lipopolysaccharide biosynthesis. The sequence is that of 2-dehydro-3-deoxyphosphooctonate aldolase from Magnetococcus marinus (strain ATCC BAA-1437 / JCM 17883 / MC-1).